Here is a 326-residue protein sequence, read N- to C-terminus: tRNA-modifying protein YgfZ (326 aa).

2 residues coordinate folate: tryptophan 27 and tryptophan 189.

This sequence belongs to the tRNA-modifying YgfZ family.

The protein localises to the cytoplasm. Its function is as follows. Folate-binding protein involved in regulating the level of ATP-DnaA and in the modification of some tRNAs. It is probably a key factor in regulatory networks that act via tRNA modification, such as initiation of chromosomal replication. The polypeptide is tRNA-modifying protein YgfZ (Salmonella paratyphi A (strain AKU_12601)).